The following is a 951-amino-acid chain: Glycine dehydrogenase (decarboxylating) (951 aa).

Lys709 carries the N6-(pyridoxal phosphate)lysine modification.

The protein belongs to the GcvP family. As to quaternary structure, the glycine cleavage system is composed of four proteins: P, T, L and H. Pyridoxal 5'-phosphate serves as cofactor.

The catalysed reaction is N(6)-[(R)-lipoyl]-L-lysyl-[glycine-cleavage complex H protein] + glycine + H(+) = N(6)-[(R)-S(8)-aminomethyldihydrolipoyl]-L-lysyl-[glycine-cleavage complex H protein] + CO2. The glycine cleavage system catalyzes the degradation of glycine. The P protein binds the alpha-amino group of glycine through its pyridoxal phosphate cofactor; CO(2) is released and the remaining methylamine moiety is then transferred to the lipoamide cofactor of the H protein. The chain is Glycine dehydrogenase (decarboxylating) from Gluconobacter oxydans (strain 621H) (Gluconobacter suboxydans).